The following is a 323-amino-acid chain: uncharacterized protein (323 aa).

A helical transmembrane segment spans residues 4–24 (IIFAFIILFVFLLPMIIFYQP).

The protein resides in the membrane. This is an uncharacterized protein from Escherichia coli (strain K12).